A 338-amino-acid polypeptide reads, in one-letter code: Ketol-acid reductoisomerase (NADP(+)) (338 aa).

Residues Met-1–Thr-181 form the KARI N-terminal Rossmann domain. Residues Tyr-24–Gln-27, Arg-47, and Ser-52 each bind NADP(+). The active site involves His-107. Gly-133 serves as a coordination point for NADP(+). The region spanning Asn-182–Ile-327 is the KARI C-terminal knotted domain. Asp-190, Glu-194, Glu-226, and Glu-230 together coordinate Mg(2+). Position 251 (Ser-251) interacts with substrate.

It belongs to the ketol-acid reductoisomerase family. Requires Mg(2+) as cofactor.

It carries out the reaction (2R)-2,3-dihydroxy-3-methylbutanoate + NADP(+) = (2S)-2-acetolactate + NADPH + H(+). The catalysed reaction is (2R,3R)-2,3-dihydroxy-3-methylpentanoate + NADP(+) = (S)-2-ethyl-2-hydroxy-3-oxobutanoate + NADPH + H(+). The protein operates within amino-acid biosynthesis; L-isoleucine biosynthesis; L-isoleucine from 2-oxobutanoate: step 2/4. Its pathway is amino-acid biosynthesis; L-valine biosynthesis; L-valine from pyruvate: step 2/4. Functionally, involved in the biosynthesis of branched-chain amino acids (BCAA). Catalyzes an alkyl-migration followed by a ketol-acid reduction of (S)-2-acetolactate (S2AL) to yield (R)-2,3-dihydroxy-isovalerate. In the isomerase reaction, S2AL is rearranged via a Mg-dependent methyl migration to produce 3-hydroxy-3-methyl-2-ketobutyrate (HMKB). In the reductase reaction, this 2-ketoacid undergoes a metal-dependent reduction by NADPH to yield (R)-2,3-dihydroxy-isovalerate. The chain is Ketol-acid reductoisomerase (NADP(+)) from Ralstonia nicotianae (strain ATCC BAA-1114 / GMI1000) (Ralstonia solanacearum).